The sequence spans 240 residues: NADH-quinone oxidoreductase subunit I 2 (240 aa).

4Fe-4S ferredoxin-type domains lie at T57–H86 and D97–D126. [4Fe-4S] cluster contacts are provided by C66, C69, C72, C76, C106, C109, C112, and C116. Positions I185 to P240 are disordered. Positions Y198–E211 are enriched in basic and acidic residues. Positions E215–G230 are enriched in low complexity.

This sequence belongs to the complex I 23 kDa subunit family. NDH-1 is composed of 14 different subunits. Subunits NuoA, H, J, K, L, M, N constitute the membrane sector of the complex. Requires [4Fe-4S] cluster as cofactor.

It localises to the cell membrane. It catalyses the reaction a quinone + NADH + 5 H(+)(in) = a quinol + NAD(+) + 4 H(+)(out). Its function is as follows. NDH-1 shuttles electrons from NADH, via FMN and iron-sulfur (Fe-S) centers, to quinones in the respiratory chain. The immediate electron acceptor for the enzyme in this species is believed to be ubiquinone. Couples the redox reaction to proton translocation (for every two electrons transferred, four hydrogen ions are translocated across the cytoplasmic membrane), and thus conserves the redox energy in a proton gradient. This Symbiobacterium thermophilum (strain DSM 24528 / JCM 14929 / IAM 14863 / T) protein is NADH-quinone oxidoreductase subunit I 2.